Consider the following 417-residue polypeptide: Glutamate-1-semialdehyde 2,1-aminomutase (417 aa).

N6-(pyridoxal phosphate)lysine is present on Lys-267.

This sequence belongs to the class-III pyridoxal-phosphate-dependent aminotransferase family. HemL subfamily. As to quaternary structure, homodimer. Requires pyridoxal 5'-phosphate as cofactor.

It is found in the cytoplasm. The enzyme catalyses (S)-4-amino-5-oxopentanoate = 5-aminolevulinate. Its pathway is porphyrin-containing compound metabolism; protoporphyrin-IX biosynthesis; 5-aminolevulinate from L-glutamyl-tRNA(Glu): step 2/2. This is Glutamate-1-semialdehyde 2,1-aminomutase from Solibacter usitatus (strain Ellin6076).